The chain runs to 274 residues: uncharacterized protein (274 aa).

The first 30 residues, 1 to 30 (MTVYTPTSERQAPATTHRQMWALGDYAAIA), serve as a signal peptide directing secretion.

The protein to M.tuberculosis Rv1405c.

This is an uncharacterized protein from Mycobacterium tuberculosis (strain CDC 1551 / Oshkosh).